A 509-amino-acid chain; its full sequence is Cation transporter HKT2;4 (509 aa).

Residues 1–32 lie on the Cytoplasmic side of the membrane; sequence MPIRLHIFVSSARHAINSSALICRFIAFHLSP. 2 helical membrane-spanning segments follow: residues 33 to 53 and 96 to 116; these read LLIHLSYFLIIDVLGFVALVV and VLTLLMFLGSEMFLSFLGLVL. Over 117–164 the chain is Cytoplasmic; the sequence is ESSKQNKHDPENRRVSSVTVCEQSHLEEAIPQTPSMNSTDIKRSCHKY. Helical transmembrane passes span 165 to 185 and 237 to 257; these read LVFVVLAYMIIILVTGSLLVF and GLLLLLIGQILAGSTLLPMFL. Residues 258–296 are Cytoplasmic-facing; that stretch reads RLVIWALRGLRLAKAEEPDFMMNNSSSVGFSHLLPNLQT. The next 2 membrane-spanning stretches (helical) occupy residues 297–317 and 353–373; these read IFLAAVEVAFVGMTVILFCCL and CSLVAPAALVLFMVMMYTPSL. Residues 374–400 lie on the Cytoplasmic side of the membrane; the sequence is TKLFSACQDHKQIGPESDDRTSKGKPF. A run of 2 helical transmembrane segments spans residues 401–421 and 476–496; these read LKTMAFSPLAFNTTVIMLVCI and SFSGWWSEPGKLILVLAMLYG. Residues 497-509 lie on the Cytoplasmic side of the membrane; it reads RLNSKDSTSARTR.

It belongs to the TrkH potassium transport family. HKT (TC 2.A.38.3) subfamily. As to expression, expressed in spikelets, leaf blades, leaf sheaths, internodes, nodes, the base of stems and roots.

The protein localises to the cell membrane. The enzyme catalyses K(+)(in) = K(+)(out). The catalysed reaction is Mg(2+)(in) = Mg(2+)(out). It catalyses the reaction Ca(2+)(in) = Ca(2+)(out). Functionally, high-affinity potassium transporter that does not show potassium-sodium cotransport. Potassium transport seems to be independent of sodium. Mediates transport of the divalent cations magnesium and calcium in the absence of competing potassium ions. Selectivity for potassium is dominant over divalent cations, and magnesium and calcium transport may be small and may depend on competing potassium concentrations. The polypeptide is Cation transporter HKT2;4 (Oryza sativa subsp. japonica (Rice)).